A 90-amino-acid polypeptide reads, in one-letter code: Probable Fe(2+)-trafficking protein (90 aa).

Belongs to the Fe(2+)-trafficking protein family.

Its function is as follows. Could be a mediator in iron transactions between iron acquisition and iron-requiring processes, such as synthesis and/or repair of Fe-S clusters in biosynthetic enzymes. In Stutzerimonas stutzeri (strain A1501) (Pseudomonas stutzeri), this protein is Probable Fe(2+)-trafficking protein.